We begin with the raw amino-acid sequence, 93 residues long: Large ribosomal subunit protein uL23cz/uL23cy (93 aa).

Belongs to the universal ribosomal protein uL23 family. Part of the 50S ribosomal subunit.

It localises to the plastid. It is found in the chloroplast. In terms of biological role, binds to 23S rRNA. The protein is Large ribosomal subunit protein uL23cz/uL23cy (rpl23-A) of Lotus japonicus (Lotus corniculatus var. japonicus).